Reading from the N-terminus, the 624-residue chain is Low affinity potassium transport system protein Kup (624 aa).

Transmembrane regions (helical) follow at residues 9 to 29 (LPAI…TSPL), 49 to 69 (VFGF…IKYL), 103 to 123 (VIMG…TPAI), 137 to 157 (PQLD…LFMI), 165 to 185 (VGKL…GLGL), 213 to 233 (VSFI…ALYA), 247 to 267 (WFTV…ALLL), 276 to 296 (PFFL…AALA), 337 to 357 (IYIP…IVIV), 365 to 385 (LAAA…ILST), 398 to 418 (FVAL…TANL), and 421 to 441 (LLSG…VMTT).

It belongs to the HAK/KUP transporter (TC 2.A.72) family.

Its subcellular location is the cell inner membrane. It carries out the reaction K(+)(in) + H(+)(in) = K(+)(out) + H(+)(out). Functionally, responsible for the low-affinity transport of potassium into the cell. Likely operates as a K(+):H(+) symporter. The protein is Low affinity potassium transport system protein Kup of Shigella dysenteriae serotype 1 (strain Sd197).